Reading from the N-terminus, the 1270-residue chain is Activating transcription factor 7-interacting protein 1 (1270 aa).

Met-1 carries the post-translational modification N-acetylmethionine. Residue Lys-33 forms a Glycyl lysine isopeptide (Lys-Gly) (interchain with G-Cter in SUMO2) linkage. Phosphoserine occurs at positions 57 and 113. Disordered stretches follow at residues 104-223 (DDDL…ISGD) and 235-402 (TSVD…EDET). Thr-118 is subject to Phosphothreonine. Low complexity-rich tracts occupy residues 132–203 (GDPA…SSGD) and 248–269 (DPASDDLASGDLSSSELASDDL). 2 stretches are compositionally biased toward basic and acidic residues: residues 310–327 (SNKDDDFLEKNGADEKLE) and 333–343 (DSLDEKNKADN). Positions 347-356 (ANEETLETDD) are enriched in acidic residues. The segment covering 363 to 373 (RPPENEKKVEE) has biased composition (basic and acidic residues). 6 positions are modified to phosphoserine: Ser-445, Ser-473, Ser-474, Ser-477, Ser-479, and Ser-496. 4 disordered regions span residues 455–570 (TSLL…SKRR), 658–685 (EDLKKRHEHPPNPPVSPGKTVNDVNSNN), 822–862 (PPTV…PTAS), and 886–906 (RTSLPTVGPSGLYSPSTNRGP). Over residues 474–486 (SFGSPSKQESSES) the composition is skewed to polar residues. Residues 496–509 (SDEEDISGEKDESE) show a composition bias toward acidic residues. Positions 524–552 (SNEKDNKPEEEEQVIHEDDERPSEKNEFS) are enriched in basic and acidic residues. The short motif at 553 to 571 (RRKRSKSEDMDNVQSKRRR) is the Nuclear localization signal element. Lys-558 participates in a covalent cross-link: Glycyl lysine isopeptide (Lys-Gly) (interchain with G-Cter in SUMO2). At Ser-559 the chain carries Phosphoserine. The interval 562-817 (MDNVQSKRRR…NQPSGNVEFI (256 aa)) is interaction with SETDB1. The stretch at 617–665 (KTLAELKTRVEKIECNKRHKTVLTELQAKIARLTKRFEAAKEDLKKRHE) forms a coiled coil. Residue Ser-673 is modified to Phosphoserine. Over residues 822 to 834 (PPTVSGLTKNPVS) the composition is skewed to polar residues. Positions 843–854 (KPNNVPSVPSPS) are enriched in low complexity. At Ser-899 the chain carries Phosphoserine. Glycyl lysine isopeptide (Lys-Gly) (interchain with G-Cter in SUMO2) cross-links involve residues Lys-910 and Lys-938. 2 stretches are compositionally biased toward polar residues: residues 918-942 (TSSAAEQNSNTTPRIENQTNKTIDA) and 950-964 (DSTSQCGKATGSDSS). 2 disordered regions span residues 918 to 1026 (TSSA…SQTT) and 1115 to 1160 (STGP…STSL). The segment at 965–975 (GVIDLTMDDEE) is interaction with SUMO. 2 stretches are compositionally biased toward polar residues: residues 988-999 (TPVSTMSSSQPV) and 1016-1026 (GVPTSGPSQTT). Pro residues predominate over residues 1134–1151 (PRPVHPAPLPEAPQPQRL). The tract at residues 1154–1270 (EAASTSLPQK…TDVISSTQSS (117 aa)) is interaction with MBD1. Positions 1160–1270 (LPQKPHLKLA…TDVISSTQSS (111 aa)) constitute a Fibronectin type-III domain.

Belongs to the MCAF family. Interacts with MBD1; the interaction is enhanced when MBD1 is sumoylated. Interacts with SETDB1; the interaction protects SETDB1 from proteasomal degradation and is required to stimulate histone methyltransferase activity and facilitate the conversion of dimethylated to trimethylated H3 'Lys-9'. Interacts with SUMO ubiquitin-like proteins (SUMO1, SUNO2 and SUMO3), with a preference for SUMO2 and SUMO3. Interacts with SP1, ATF7 and ZHX1. Interacts with the general transcription machinery, including ERCC2, ERCC3, GTF2E1, GTF2E2 and POLR2A. In terms of assembly, (Microbial infection) Interacts with Epstein-Barr virus BRLF1/Rta protein, leading to the regulation of host genes in Epstein-Barr virus-infected cells. Detected at low levels in breast, lung and stomach; highly up-regulated in the corresponding cancerous tissues (at protein level).

It localises to the nucleus. Its function is as follows. Recruiter that couples transcriptional factors to general transcription apparatus and thereby modulates transcription regulation and chromatin formation. Can both act as an activator or a repressor depending on the context. Required for HUSH-mediated heterochromatin formation and gene silencing. Mediates MBD1-dependent transcriptional repression, probably by recruiting complexes containing SETDB1. Stabilizes SETDB1, is required to stimulate histone methyltransferase activity of SETDB1 and facilitates the conversion of dimethylated to trimethylated H3 'Lys-9' (H3K9me3). The complex formed with MBD1 and SETDB1 represses transcription and couples DNA methylation and histone H3 'Lys-9' trimethylation (H3K9me3). Facilitates telomerase TERT and TERC gene expression by SP1 in cancer cells. The sequence is that of Activating transcription factor 7-interacting protein 1 from Homo sapiens (Human).